A 262-amino-acid polypeptide reads, in one-letter code: Adenosylcobinamide-GDP ribazoletransferase (262 aa).

A run of 6 helical transmembrane segments spans residues 11–31 (LNLF…SWVI), 43–63 (YFGL…WFTQ), 66–86 (LPTS…TGGF), 121–141 (AIVL…LALF), 146–166 (AITG…SLIF), and 199–219 (IFVL…SLWA).

This sequence belongs to the CobS family. The cofactor is Mg(2+).

It localises to the cell inner membrane. It carries out the reaction alpha-ribazole + adenosylcob(III)inamide-GDP = adenosylcob(III)alamin + GMP + H(+). The catalysed reaction is alpha-ribazole 5'-phosphate + adenosylcob(III)inamide-GDP = adenosylcob(III)alamin 5'-phosphate + GMP + H(+). It functions in the pathway cofactor biosynthesis; adenosylcobalamin biosynthesis; adenosylcobalamin from cob(II)yrinate a,c-diamide: step 7/7. In terms of biological role, joins adenosylcobinamide-GDP and alpha-ribazole to generate adenosylcobalamin (Ado-cobalamin). Also synthesizes adenosylcobalamin 5'-phosphate from adenosylcobinamide-GDP and alpha-ribazole 5'-phosphate. The chain is Adenosylcobinamide-GDP ribazoletransferase from Shewanella denitrificans (strain OS217 / ATCC BAA-1090 / DSM 15013).